The following is a 140-amino-acid chain: Large ribosomal subunit protein uL11 (140 aa).

This sequence belongs to the universal ribosomal protein uL11 family. Part of the ribosomal stalk of the 50S ribosomal subunit. Interacts with L10 and the large rRNA to form the base of the stalk. L10 forms an elongated spine to which L12 dimers bind in a sequential fashion forming a multimeric L10(L12)X complex. In terms of processing, one or more lysine residues are methylated.

Forms part of the ribosomal stalk which helps the ribosome interact with GTP-bound translation factors. The polypeptide is Large ribosomal subunit protein uL11 (Staphylococcus aureus (strain bovine RF122 / ET3-1)).